The following is a 291-amino-acid chain: G1/S-specific cyclin-D1 (291 aa).

At threonine 282 the chain carries Phosphothreonine.

It belongs to the cyclin family. Cyclin D subfamily. As to quaternary structure, interacts with the CDK4 and CDK6 protein kinases to form a serine/threonine kinase holoenzyme complex. The cyclin subunit imparts substrate specificity to the complex. Phosphorylation at Thr-282 by MAP kinases is required for ubiquitination and degradation by the DCX(AMBRA1) complex. In terms of processing, ubiquitinated by the DCX(AMBRA1) complex during the transition from G1 to S cell phase, leading to its degradation. The DCX(AMBRA1) complex represents the major regulator of CCND1 stability during the G1/S transition.

It is found in the nucleus. It localises to the cytoplasm. Regulatory component of the cyclin D1-CDK4 (DC) complex that phosphorylates and inhibits members of the retinoblastoma (RB) protein family including RB1 and regulates the cell-cycle during G(1)/S transition. Phosphorylation of RB1 allows dissociation of the transcription factor E2F from the RB/E2F complex and the subsequent transcription of E2F target genes which are responsible for the progression through the G(1) phase. Hypophosphorylates RB1 in early G(1) phase. Cyclin D-CDK4 complexes are major integrators of various mitogenenic and antimitogenic signals. In Danio rerio (Zebrafish), this protein is G1/S-specific cyclin-D1 (ccnd1).